A 141-amino-acid chain; its full sequence is Large ribosomal subunit protein uL16 (141 aa).

This sequence belongs to the universal ribosomal protein uL16 family. Part of the 50S ribosomal subunit.

Binds 23S rRNA and is also seen to make contacts with the A and possibly P site tRNAs. This chain is Large ribosomal subunit protein uL16, found in Deinococcus geothermalis (strain DSM 11300 / CIP 105573 / AG-3a).